Consider the following 981-residue polypeptide: MVHHSGSIQSFKQQKGMNISKSEITTEASLKPSRRSLPCLAQSYAHSKSLSQSASLFQSTESESQAPTSVTFLSADKPEHVTSEESRKDSTLKCSFADLSDFCLALGKDKDYLDESEHANYDRSRLLNDFVTKDKPASKTKLSKNDMSYIASSGLLFKDGKKRIDYILVYRKTNIQYDKRNTFEKNLRAEGLMLEKEPAIANPDIMFIKIHIPWDTLCKYAERLNIRVPFRKKCYYTDQKNKSKSRVQNYFKRIKKWMSQNPMVLDKSAFPELEESDCYTGPFSRARIHHFIINNKDTFFSNATRSRIVYHMLERTKYENGISKVGIRKLITNGSYIAAFPPHEGAYKSSLPIKTHGPQNNRHLLYERWARWGMWYKHQPLDLIRMYFGEKIGLYFAWLGWYTGMLIPAAVVGLCVFFYGLVTMNESQVSQEICKATEVFMCPLCDKNCSLQRLNDSCIYAKVTYLFDNGGTVFFAIFMAIWATVFLEFWKRRRSILTYTWDLIEWEEEEETLRPQFEAKYYRMEVINPITGKPEPHQPSSDKVTRLLVSVSGIFFMISLVITAVFAVVVYRLVVMEQFASFKWNFVKQHWQFATSGAAVCINFIIIMLLNLAYEKIAYLLTNLEYPRTESEWENSFALKMFLFQFVNLNSSIFYIAFFLGRFVGHPGKYNKLFERWRLEECHPSGCLIDLCLQMGVIMFLKQIWNNFMELGYPLIQNWWSRHKIKRGIQDASIPQWENDWNLQPMNIHGLMDEYLEMVLQFGFTTIFVAAFPLAPLLALLNNIIEIRLDAYKFVTQWRRPLPARATDIGIWLGILEGIGILAVITNAFVIAITSDYIPRFVYEYKYGPCANHVKQNENCLKGYVNNSLSFFDLSELGMGKSGYCRYRDYRGPPWSSKPYEFTLQYWHILAARLAFIIVFEHLVFGIKSFIAYLIPDIPKGLRERIRREKYLVQEMMYEAELEHLQQQRRKSGQPIHHEWP.

Residues 1 to 28 (MVHHSGSIQSFKQQKGMNISKSEITTEA) show a composition bias toward polar residues. 2 disordered regions span residues 1-32 (MVHH…SLKP) and 67-87 (PTSV…EESR). Residues 1–403 (MVHHSGSIQS…LYFAWLGWYT (403 aa)) are Cytoplasmic-facing. The segment covering 76–87 (DKPEHVTSEESR) has biased composition (basic and acidic residues). Residues 404 to 424 (GMLIPAAVVGLCVFFYGLVTM) traverse the membrane as a helical segment. N-linked (GlcNAc...) asparagine glycans are attached at residues asparagine 425, asparagine 448, and asparagine 455. At 425–469 (NESQVSQEICKATEVFMCPLCDKNCSLQRLNDSCIYAKVTYLFDN) the chain is on the extracellular side. A helical membrane pass occupies residues 470–490 (GGTVFFAIFMAIWATVFLEFW). The Cytoplasmic segment spans residues 491–550 (KRRRSILTYTWDLIEWEEEEETLRPQFEAKYYRMEVINPITGKPEPHQPSSDKVTRLLVS). The helical transmembrane segment at 551–571 (VSGIFFMISLVITAVFAVVVY) threads the bilayer. Topologically, residues 572–592 (RLVVMEQFASFKWNFVKQHWQ) are extracellular. A helical membrane pass occupies residues 593-613 (FATSGAAVCINFIIIMLLNLA). Residues 614–640 (YEKIAYLLTNLEYPRTESEWENSFALK) lie on the Cytoplasmic side of the membrane. The helical transmembrane segment at 641-661 (MFLFQFVNLNSSIFYIAFFLG) threads the bilayer. Over 662-761 (RFVGHPGKYN…MDEYLEMVLQ (100 aa)) the chain is Extracellular. Residues 762–782 (FGFTTIFVAAFPLAPLLALLN) form a helical membrane-spanning segment. At 783 to 810 (NIIEIRLDAYKFVTQWRRPLPARATDIG) the chain is on the cytoplasmic side. A helical membrane pass occupies residues 811-831 (IWLGILEGIGILAVITNAFVI). Topologically, residues 832–914 (AITSDYIPRF…QYWHILAARL (83 aa)) are extracellular. Asparagine 866 carries N-linked (GlcNAc...) asparagine glycosylation. Residues 915–935 (AFIIVFEHLVFGIKSFIAYLI) form a helical membrane-spanning segment. Over 936 to 981 (PDIPKGLRERIRREKYLVQEMMYEAELEHLQQQRRKSGQPIHHEWP) the chain is Cytoplasmic.

Belongs to the anoctamin family. As to quaternary structure, interacts with KCNT1/Slack. In terms of tissue distribution, predominantly expressed in neuronal tissues. Expressed in brain.

The protein resides in the cell membrane. The catalysed reaction is a 1,2-diacyl-sn-glycero-3-phosphocholine(in) = a 1,2-diacyl-sn-glycero-3-phosphocholine(out). It catalyses the reaction a beta-D-galactosyl-(1&lt;-&gt;1')-N-acylsphing-4-enine(out) = a beta-D-galactosyl-(1&lt;-&gt;1')-N-acylsphing-4-enine(in). Has calcium-dependent phospholipid scramblase activity; scrambles phosphatidylcholine and galactosylceramide. Does not exhibit calcium-activated chloride channel (CaCC) activity. Seems to act as potassium channel regulator and may inhibit pain signaling; can facilitate KCNT1/Slack channel activity by promoting its full single-channel conductance at very low sodium concentrations and by increasing its sodium sensitivity. The chain is Anoctamin-3 from Mus musculus (Mouse).